The sequence spans 355 residues: 3-dehydroquinate synthase (355 aa).

Residues E71–K76, G105–D109, T129–S130, K142, K151, and T169–T172 contribute to the NAD(+) site. 3 residues coordinate Zn(2+): E184, H246, and H263.

This sequence belongs to the sugar phosphate cyclases superfamily. Dehydroquinate synthase family. Co(2+) is required as a cofactor. It depends on Zn(2+) as a cofactor. NAD(+) serves as cofactor.

The protein resides in the cytoplasm. The catalysed reaction is 7-phospho-2-dehydro-3-deoxy-D-arabino-heptonate = 3-dehydroquinate + phosphate. It functions in the pathway metabolic intermediate biosynthesis; chorismate biosynthesis; chorismate from D-erythrose 4-phosphate and phosphoenolpyruvate: step 2/7. Catalyzes the conversion of 3-deoxy-D-arabino-heptulosonate 7-phosphate (DAHP) to dehydroquinate (DHQ). The protein is 3-dehydroquinate synthase of Streptococcus suis (strain 98HAH33).